A 226-amino-acid chain; its full sequence is Orotate phosphoribosyltransferase (226 aa).

5-phospho-alpha-D-ribose 1-diphosphate-binding positions include Arg-107, Lys-108, Lys-111, and 133–141; that span reads EDLTTDGGS. Thr-137 provides a ligand contact to orotate.

The protein belongs to the purine/pyrimidine phosphoribosyltransferase family. PyrE subfamily. Homodimer. Requires Mg(2+) as cofactor.

It carries out the reaction orotidine 5'-phosphate + diphosphate = orotate + 5-phospho-alpha-D-ribose 1-diphosphate. The protein operates within pyrimidine metabolism; UMP biosynthesis via de novo pathway; UMP from orotate: step 1/2. Catalyzes the transfer of a ribosyl phosphate group from 5-phosphoribose 1-diphosphate to orotate, leading to the formation of orotidine monophosphate (OMP). The protein is Orotate phosphoribosyltransferase of Dinoroseobacter shibae (strain DSM 16493 / NCIMB 14021 / DFL 12).